Here is a 378-residue protein sequence, read N- to C-terminus: Phospho-N-acetylmuramoyl-pentapeptide-transferase (378 aa).

A run of 11 helical transmembrane segments spans residues L26–N46, L57–L77, M103–A123, L127–W147, G171–V191, W195–A215, G225–L245, P247–W267, V275–A295, L302–Y322, and I356–W376.

Belongs to the glycosyltransferase 4 family. MraY subfamily. Requires Mg(2+) as cofactor.

The protein resides in the cell inner membrane. The enzyme catalyses UDP-N-acetyl-alpha-D-muramoyl-L-alanyl-gamma-D-glutamyl-meso-2,6-diaminopimeloyl-D-alanyl-D-alanine + di-trans,octa-cis-undecaprenyl phosphate = di-trans,octa-cis-undecaprenyl diphospho-N-acetyl-alpha-D-muramoyl-L-alanyl-D-glutamyl-meso-2,6-diaminopimeloyl-D-alanyl-D-alanine + UMP. It functions in the pathway cell wall biogenesis; peptidoglycan biosynthesis. Its function is as follows. Catalyzes the initial step of the lipid cycle reactions in the biosynthesis of the cell wall peptidoglycan: transfers peptidoglycan precursor phospho-MurNAc-pentapeptide from UDP-MurNAc-pentapeptide onto the lipid carrier undecaprenyl phosphate, yielding undecaprenyl-pyrophosphoryl-MurNAc-pentapeptide, known as lipid I. The polypeptide is Phospho-N-acetylmuramoyl-pentapeptide-transferase (Thermosynechococcus vestitus (strain NIES-2133 / IAM M-273 / BP-1)).